The sequence spans 225 residues: NAD(P)H-quinone oxidoreductase subunit K, chloroplastic (225 aa).

The [4Fe-4S] cluster site is built by Cys-43, Cys-44, Cys-108, and Cys-139.

Belongs to the complex I 20 kDa subunit family. In terms of assembly, NDH is composed of at least 16 different subunits, 5 of which are encoded in the nucleus. [4Fe-4S] cluster serves as cofactor.

The protein localises to the plastid. The protein resides in the chloroplast thylakoid membrane. The catalysed reaction is a plastoquinone + NADH + (n+1) H(+)(in) = a plastoquinol + NAD(+) + n H(+)(out). It carries out the reaction a plastoquinone + NADPH + (n+1) H(+)(in) = a plastoquinol + NADP(+) + n H(+)(out). Its function is as follows. NDH shuttles electrons from NAD(P)H:plastoquinone, via FMN and iron-sulfur (Fe-S) centers, to quinones in the photosynthetic chain and possibly in a chloroplast respiratory chain. The immediate electron acceptor for the enzyme in this species is believed to be plastoquinone. Couples the redox reaction to proton translocation, and thus conserves the redox energy in a proton gradient. This Manihot esculenta (Cassava) protein is NAD(P)H-quinone oxidoreductase subunit K, chloroplastic.